The sequence spans 324 residues: MELLPHEKQVVEYEKTIAEFKEKNKENSLLSSSEIQKLDKRLDRLKEKIYSDLTPWERVQICRHPSRPRTVNYIEGMCEEFVELCGDRTFRDDPAVVGGFAKIQGQRFMLIGQEKGCDTKSRMHRNFGMLCPEGFRKALRLAKMAEKFGLPIIFLVDTPGAFPGLTAEERGQGWAIATNLFELARLATPIIVIVIGEGCSGGALGMAIGDVVAMLEHSYYSVISPEGCASILWKDPKKNSDAAAMLKMHGEDLKGFAIVDAVIKEPIGGAHHNPAATYRSVQEYVLQEWVKLKDLPVEELLEKRYQKFRTIGLYETSSESDSEA.

Residues 37 to 291 (KLDKRLDRLK…QEYVLQEWVK (255 aa)) form the CoA carboxyltransferase C-terminal domain.

This sequence belongs to the AccA family. In terms of assembly, acetyl-CoA carboxylase is a heterohexamer composed of biotin carboxyl carrier protein (AccB), biotin carboxylase (AccC) and two subunits each of ACCase subunit alpha (AccA) and ACCase subunit beta (AccD).

It is found in the cytoplasm. It carries out the reaction N(6)-carboxybiotinyl-L-lysyl-[protein] + acetyl-CoA = N(6)-biotinyl-L-lysyl-[protein] + malonyl-CoA. The protein operates within lipid metabolism; malonyl-CoA biosynthesis; malonyl-CoA from acetyl-CoA: step 1/1. Functionally, component of the acetyl coenzyme A carboxylase (ACC) complex. First, biotin carboxylase catalyzes the carboxylation of biotin on its carrier protein (BCCP) and then the CO(2) group is transferred by the carboxyltransferase to acetyl-CoA to form malonyl-CoA. The sequence is that of Acetyl-coenzyme A carboxylase carboxyl transferase subunit alpha from Chlamydia trachomatis serovar L2 (strain ATCC VR-902B / DSM 19102 / 434/Bu).